A 571-amino-acid chain; its full sequence is Phosphoenolpyruvate-protein phosphotransferase (571 aa).

The Tele-phosphohistidine intermediate role is filled by histidine 207. 2 residues coordinate phosphoenolpyruvate: arginine 312 and arginine 348. Residues glutamate 435 and aspartate 459 each coordinate Mg(2+). Phosphoenolpyruvate is bound by residues 458 to 459 (ND) and arginine 469. Cysteine 506 acts as the Proton donor in catalysis.

It belongs to the PEP-utilizing enzyme family. As to quaternary structure, homodimer. Mg(2+) serves as cofactor.

The protein resides in the cytoplasm. It catalyses the reaction L-histidyl-[protein] + phosphoenolpyruvate = N(pros)-phospho-L-histidyl-[protein] + pyruvate. Functionally, general (non sugar-specific) component of the phosphoenolpyruvate-dependent sugar phosphotransferase system (sugar PTS). This major carbohydrate active-transport system catalyzes the phosphorylation of incoming sugar substrates concomitantly with their translocation across the cell membrane. Enzyme I transfers the phosphoryl group from phosphoenolpyruvate (PEP) to the phosphoryl carrier protein (HPr). This chain is Phosphoenolpyruvate-protein phosphotransferase (ptsI), found in Chlamydia trachomatis serovar D (strain ATCC VR-885 / DSM 19411 / UW-3/Cx).